A 714-amino-acid chain; its full sequence is Polyribonucleotide nucleotidyltransferase (714 aa).

Mg(2+)-binding residues include aspartate 488 and aspartate 494. Residues 555 to 614 (PRIEVMNIPVDKIREVIGSGGKVIREIVEKTGAKINIDDDGTVKIASASGKEIEAARKWI) enclose the KH domain. The region spanning 624-692 (GQVYEGTVVK…ERGKVRLSMK (69 aa)) is the S1 motif domain.

It belongs to the polyribonucleotide nucleotidyltransferase family. It depends on Mg(2+) as a cofactor.

Its subcellular location is the cytoplasm. It catalyses the reaction RNA(n+1) + phosphate = RNA(n) + a ribonucleoside 5'-diphosphate. Functionally, involved in mRNA degradation. Catalyzes the phosphorolysis of single-stranded polyribonucleotides processively in the 3'- to 5'-direction. This Sinorhizobium medicae (strain WSM419) (Ensifer medicae) protein is Polyribonucleotide nucleotidyltransferase.